Reading from the N-terminus, the 240-residue chain is Phosphatidylserine decarboxylase proenzyme (240 aa).

S209 (schiff-base intermediate with substrate; via pyruvic acid) is an active-site residue. A Pyruvic acid (Ser); by autocatalysis modification is found at S209.

This sequence belongs to the phosphatidylserine decarboxylase family. PSD-A subfamily. As to quaternary structure, heterodimer of a large membrane-associated beta subunit and a small pyruvoyl-containing alpha subunit. It depends on pyruvate as a cofactor. Post-translationally, is synthesized initially as an inactive proenzyme. Formation of the active enzyme involves a self-maturation process in which the active site pyruvoyl group is generated from an internal serine residue via an autocatalytic post-translational modification. Two non-identical subunits are generated from the proenzyme in this reaction, and the pyruvate is formed at the N-terminus of the alpha chain, which is derived from the carboxyl end of the proenzyme. The post-translation cleavage follows an unusual pathway, termed non-hydrolytic serinolysis, in which the side chain hydroxyl group of the serine supplies its oxygen atom to form the C-terminus of the beta chain, while the remainder of the serine residue undergoes an oxidative deamination to produce ammonia and the pyruvoyl prosthetic group on the alpha chain.

Its subcellular location is the cell membrane. It catalyses the reaction a 1,2-diacyl-sn-glycero-3-phospho-L-serine + H(+) = a 1,2-diacyl-sn-glycero-3-phosphoethanolamine + CO2. Its pathway is phospholipid metabolism; phosphatidylethanolamine biosynthesis; phosphatidylethanolamine from CDP-diacylglycerol: step 2/2. Its function is as follows. Catalyzes the formation of phosphatidylethanolamine (PtdEtn) from phosphatidylserine (PtdSer). The protein is Phosphatidylserine decarboxylase proenzyme of Mycobacterium ulcerans (strain Agy99).